The chain runs to 209 residues: ATP-dependent dethiobiotin synthetase BioD (209 aa).

ATP is bound at residue 13 to 18 (DVGKTV). Thr17 provides a ligand contact to Mg(2+). Lys33 is an active-site residue. Glu100 lines the Mg(2+) pocket. ATP-binding positions include 100 to 103 (EGAG) and 184 to 186 (PRL).

Belongs to the dethiobiotin synthetase family. Homodimer. Mg(2+) serves as cofactor.

The protein localises to the cytoplasm. It catalyses the reaction (7R,8S)-7,8-diammoniononanoate + CO2 + ATP = (4R,5S)-dethiobiotin + ADP + phosphate + 3 H(+). It functions in the pathway cofactor biosynthesis; biotin biosynthesis; biotin from 7,8-diaminononanoate: step 1/2. Catalyzes a mechanistically unusual reaction, the ATP-dependent insertion of CO2 between the N7 and N8 nitrogen atoms of 7,8-diaminopelargonic acid (DAPA, also called 7,8-diammoniononanoate) to form a ureido ring. The polypeptide is ATP-dependent dethiobiotin synthetase BioD (Rhizorhabdus wittichii (strain DSM 6014 / CCUG 31198 / JCM 15750 / NBRC 105917 / EY 4224 / RW1) (Sphingomonas wittichii)).